The chain runs to 511 residues: Sulfate adenylyltransferase (511 aa).

Positions 1 to 167 are N-terminal; that stretch reads MPAPHGGILQ…LEAIQLPQHY (167 aa). The tract at residues 168–393 is catalytic; sequence DYPGLRKTPA…LRESNPPRPK (226 aa). Residue Gln-195 participates in sulfate binding. Residues 195–198 and 289–292 each bind ATP; these read QTRN and GRDH. Catalysis depends on residues Thr-196, Arg-197, and Asn-198. Arg-197 contributes to the sulfate binding site. Ala-293 lines the sulfate pocket. Val-331 serves as a coordination point for ATP. Positions 394 to 511 are required for oligomerization; adenylyl-sulfate kinase-like; sequence QGFSIVLGNS…FLEDNGFFVF (118 aa).

The protein belongs to the sulfate adenylyltransferase family. In terms of assembly, homohexamer. Dimer of trimers.

The protein resides in the cytoplasm. The catalysed reaction is sulfate + ATP + H(+) = adenosine 5'-phosphosulfate + diphosphate. Its pathway is sulfur metabolism; hydrogen sulfide biosynthesis; sulfite from sulfate: step 1/3. In terms of biological role, catalyzes the first intracellular reaction of sulfate assimilation, forming adenosine-5'-phosphosulfate (APS) from inorganic sulfate and ATP. Plays an important role in sulfate activation as a component of the biosynthesis pathway of sulfur-containing amino acids. The chain is Sulfate adenylyltransferase from Saccharomyces cerevisiae (strain ATCC 204508 / S288c) (Baker's yeast).